A 447-amino-acid polypeptide reads, in one-letter code: Probable glycine dehydrogenase (decarboxylating) subunit 1 (447 aa).

It belongs to the GcvP family. N-terminal subunit subfamily. As to quaternary structure, the glycine cleavage system is composed of four proteins: P, T, L and H. In this organism, the P 'protein' is a heterodimer of two subunits.

It catalyses the reaction N(6)-[(R)-lipoyl]-L-lysyl-[glycine-cleavage complex H protein] + glycine + H(+) = N(6)-[(R)-S(8)-aminomethyldihydrolipoyl]-L-lysyl-[glycine-cleavage complex H protein] + CO2. Its function is as follows. The glycine cleavage system catalyzes the degradation of glycine. The P protein binds the alpha-amino group of glycine through its pyridoxal phosphate cofactor; CO(2) is released and the remaining methylamine moiety is then transferred to the lipoamide cofactor of the H protein. The chain is Probable glycine dehydrogenase (decarboxylating) subunit 1 from Sulfolobus acidocaldarius (strain ATCC 33909 / DSM 639 / JCM 8929 / NBRC 15157 / NCIMB 11770).